Reading from the N-terminus, the 161-residue chain is uncharacterized protein (161 aa).

A coiled-coil region spans residues 1-29 (MTLYDTVKELQEKLRNGEIEINTFLERLG).

This is an uncharacterized protein from Acidianus convivator (ATV).